The sequence spans 904 residues: Structural polyprotein (904 aa).

Disordered regions lie at residues 1-27, 35-54, and 320-348; these read ADQETNTSNVHNTQLASTSEENSVETE, VETPNRINTPMAQDTSSARS, and NNSNKMATPVKEKTKNIPKPKTENPKIGP. The span at 39-53 shows a compositional bias: polar residues; the sequence is NRINTPMAQDTSSAR. Basic and acidic residues predominate over residues 329–343; the sequence is VKEKTKNIPKPKTEN.

It belongs to the picornaviruses polyprotein family. Post-translationally, specific enzymatic cleavages in vivo yield mature proteins.

It localises to the virion. Its subcellular location is the host cytoplasm. Functionally, structural polyprotein: precursor of all the viral capsid proteins. In terms of biological role, forms, together with protein VP2 and protein VP3, an icosahedral capsid protecting the viral RNA genome. The icosahedral capsid has a pseudo-T=3 symmetry with a diameter of approximately 300 Angstroms, and is composed of 60 copies of each capsid proteins. Its function is as follows. Forms, together with protein VP1 and protein VP3, an icosahedral capsid protecting the viral RNA genome. The icosahedral capsid has a pseudo-T=3 symmetry with a diameter of approximately 300 Angstroms, and is composed of 60 copies of each capsid proteins. Forms, together with protein VP1 and protein VP2, an icosahedral capsid protecting the viral RNA genome. The icosahedral capsid has a pseudo-T=3 symmetry with a diameter of approximately 300 Angstroms, and is composed of 60 copies of each capsid proteins. This chain is Structural polyprotein, found in Apis mellifera (Honeybee).